The following is a 389-amino-acid chain: GDSL esterase/lipase At1g28570 (389 aa).

The N-terminal stretch at 1–25 (MATLFMKLVSFFLILSTFCLTTVNS) is a signal peptide. Residue S41 is the Nucleophile of the active site. Residues N137 and N319 are each glycosylated (N-linked (GlcNAc...) asparagine). Active-site residues include D344 and H347.

Belongs to the 'GDSL' lipolytic enzyme family.

The protein resides in the secreted. In Arabidopsis thaliana (Mouse-ear cress), this protein is GDSL esterase/lipase At1g28570.